Reading from the N-terminus, the 173-residue chain is Disulfide bond formation protein B (173 aa).

The Cytoplasmic segment spans residues 1 to 11 (MNALQWSFRAQ). The chain crosses the membrane as a helical span at residues 12–28 (CLTGFLFCTGLLAYAIF). Over 29-46 (LQLHQGLEPCPLCIFQRI) the chain is Periplasmic. Residues Cys38 and Cys41 are joined by a disulfide bond. The chain crosses the membrane as a helical span at residues 47–63 (AFAVLGILFLIAGLYNS). At 64-70 (SNVYTRK) the chain is on the cytoplasmic side. A helical membrane pass occupies residues 71 to 88 (AYGLLIFLTAIIGTGIAG). Residues 89–145 (RHVWVQLMPHNTISSCGSPLSFLSETMGPFEVFRTVLTGTSNCGNIDWRFLGLSMPM) lie on the Periplasmic side of the membrane. Cysteines 104 and 131 form a disulfide. A helical membrane pass occupies residues 146-164 (WSMFWFVALALLGLLVGFK). The Cytoplasmic portion of the chain corresponds to 165–173 (AERRKPLFS).

Belongs to the DsbB family.

The protein resides in the cell inner membrane. Required for disulfide bond formation in some periplasmic proteins. Acts by oxidizing the DsbA protein. The polypeptide is Disulfide bond formation protein B (Xylella fastidiosa (strain Temecula1 / ATCC 700964)).